A 790-amino-acid chain; its full sequence is MENFQYSVQLSDQDWAEFSATADECGLLQAGLASGDELLSSDIDQGDSSGSSPPRAPPLPTGQLAAGGRSRRGCEEEDVATQQPVSRSQGEPVLALGTGQQTPSTSARAEAPPSLGPGASPPSQFSSCPGPASSGDQMQRLLQGPAPRPPGEPPGSPKSPGHSTGSQRPPDSPGAPPRSPSRKKRRAVGAKGGGHTGASASAQTGSPLLPAASPETAKLMAKAGQEELGPGPAGAPEPGPRSPVQEDRPGPGLGLSTPVPVTEQGTDQIRTPRRAKLHTVSTTVWEALPDVSRAKSDMAVSTPASEPQPDRDMAVSTPASEPQSDRDMAVSTPASEPQPDTDMAVSTPASEPQPDRDMAVSIPASKPQSDTAVSTPASEPQSSVALSTPISKPQLDTDVAVSTPASKHGLDVALPTAGPVAKLEVASSPPVSEAVPRMTESSGLVSTPVPRADAAGLAWPPTRRAGPDVVEMEAVVSEPSAGAPGCCSGAPALGLTQVPRKKKVRFSVAGPSPNKPGSGQASARPSAPQTATGAHGGPGAWEAVAVGPRPHQPRILKHLPRPPPSAVTRVGPGSSFAVTLPEAYEFFFCDTIEENEEAEAAAAGQDPAGVQWPDMCEFFFPDVGAQRSRRRGSPEPLPRADPVPAPIPGDPVPISIPEVYEHFFFGEDRLEGVLGPAVPLPLQALEPPRSASEGAGPGTPLKPAVVERLHLALRRAGELRGPVPSFAFSQNDMCLVFVAFATWAVRTSDPHTPDAWKTALLANVGTISAIRYFRRQVGQGRRSHSPSPSS.

Disordered stretches follow at residues 38-391 (LLSS…TPIS), 425-449 (VASSPPVSEAVPRMTESSGLVSTPV), 507-545 (SVAGPSPNKPGSGQASARPSAPQTATGAHGGPGAWEAVA), and 626-648 (QRSRRRGSPEPLPRADPVPAPIP). Residues 40–52 (SSDIDQGDSSGSS) are compositionally biased toward low complexity. 2 stretches are compositionally biased toward polar residues: residues 80 to 89 (ATQQPVSRSQ) and 98 to 107 (TGQQTPSTSA). The span at 111 to 123 (APPSLGPGASPPS) shows a compositional bias: low complexity. Positions 146 to 157 (APRPPGEPPGSP) are enriched in pro residues. The span at 158 to 169 (KSPGHSTGSQRP) shows a compositional bias: low complexity. Residues 170–179 (PDSPGAPPRS) show a composition bias toward pro residues. Residues 366-391 (KPQSDTAVSTPASEPQSSVALSTPIS) are compositionally biased toward polar residues. A compositionally biased stretch (polar residues) spans 515–532 (KPGSGQASARPSAPQTAT). The segment covering 635 to 648 (EPLPRADPVPAPIP) has biased composition (pro residues).

Muscle-specific expression is increased by endurance exercise.

Its subcellular location is the cytoplasm. The protein resides in the nucleus. In terms of biological role, regulates the expression of selective PPARGC1A/B and ESRRA/B/G target genes with roles in glucose and lipid metabolism, energy transfer, contractile function, muscle mitochondrial biogenesis and oxidative capacity. Required for the efficient induction of MT-CO2, MT-CO3, COX4I1, TFB1M, TFB2M, POLRMT and SIRT3 by PPARGC1A. Positively regulates the PPARGC1A/ESRRG-induced expression of CKMT2, TNNI3 and SLC2A4 and negatively regulates the PPARGC1A/ESRRG-induced expression of PDK4. The chain is PGC-1 and ERR-induced regulator in muscle protein 1 (PERM1) from Homo sapiens (Human).